The following is a 157-amino-acid chain: 2-C-methyl-D-erythritol 2,4-cyclodiphosphate synthase (157 aa).

Asp-8 and His-10 together coordinate a divalent metal cation. Residues 8-10 (DIH) and 34-35 (HS) each bind 4-CDP-2-C-methyl-D-erythritol 2-phosphate. Residue His-42 participates in a divalent metal cation binding. Residues 56-58 (DIG), 61-65 (FPDTD), 132-135 (TTNE), and Arg-142 each bind 4-CDP-2-C-methyl-D-erythritol 2-phosphate.

The protein belongs to the IspF family. As to quaternary structure, homotrimer. A divalent metal cation is required as a cofactor.

The enzyme catalyses 4-CDP-2-C-methyl-D-erythritol 2-phosphate = 2-C-methyl-D-erythritol 2,4-cyclic diphosphate + CMP. It functions in the pathway isoprenoid biosynthesis; isopentenyl diphosphate biosynthesis via DXP pathway; isopentenyl diphosphate from 1-deoxy-D-xylulose 5-phosphate: step 4/6. Its function is as follows. Involved in the biosynthesis of isopentenyl diphosphate (IPP) and dimethylallyl diphosphate (DMAPP), two major building blocks of isoprenoid compounds. Catalyzes the conversion of 4-diphosphocytidyl-2-C-methyl-D-erythritol 2-phosphate (CDP-ME2P) to 2-C-methyl-D-erythritol 2,4-cyclodiphosphate (ME-CPP) with a corresponding release of cytidine 5-monophosphate (CMP). This is 2-C-methyl-D-erythritol 2,4-cyclodiphosphate synthase from Chloroherpeton thalassium (strain ATCC 35110 / GB-78).